The following is a 477-amino-acid chain: Delayed-rectifier potassium channel regulatory subunit KCNS2 (477 aa).

Over 1–184 (MTGQSLWDVS…LALDNPGYSV (184 aa)) the chain is Cytoplasmic. Residues 185–206 (LSRVFSILSILVVMGSIITMCL) traverse the membrane as a helical segment. Residues 207-225 (NSLPDFQIPDSQGNPGEDP) lie on the Extracellular side of the membrane. Residues 226-248 (RFEIVEHFGIAWFTFELVARFAV) form a helical membrane-spanning segment. Residues 249–259 (APDFLKFFKNA) are Cytoplasmic-facing. The chain crosses the membrane as a helical span at residues 260-280 (LNLIDLMSIVPFYITLVVNLV). Over 281–290 (VESTPTLANL) the chain is Extracellular. Residues 291 to 311 (GRVAQVLRLMRIFRILKLARH) form a helical; Voltage-sensor membrane-spanning segment. Residues 312–326 (STGLRSLGATLKYSY) lie on the Cytoplasmic side of the membrane. Residues 327–348 (KEVGLLLLYLSVGISIFSVVAY) traverse the membrane as a helical segment. The Extracellular segment spans residues 349-361 (TIEKEENEGLATI). An intramembrane region (helical) is located at residues 362 to 373 (PACWWWATVSMT). Positions 374–379 (TVGYGD) match the Selectivity filter motif. The stretch at 374 to 381 (TVGYGDVV) is an intramembrane region. Over 382–388 (PGTTAGK) the chain is Extracellular. A helical transmembrane segment spans residues 389–417 (LTASACILAGILVVVLPITLIFNKFSHFY). Residues 418-477 (RRQKQLESAMRSCDFGDGMKEVPSVNLRDYYAHKVKSLMASLTNMSRSSPSELSLNDSLR) are Cytoplasmic-facing.

Belongs to the potassium channel family. S (TC 1.A.1.2) subfamily. Kv9.2/KCNS2 sub-subfamily. In terms of assembly, heterotetramer with KCNB1 and KCNB2. Does not form homomultimers.

Its subcellular location is the cell membrane. Its function is as follows. Potassium channel regulatory subunit that modulate the delayed rectifier voltage-gated potassium channel activity of KCNB1 and KCNB2 by altering their kinetics, expression levels, and shifting the half-inactivation potential to more polarized values. While it does not form functional channels on its own, it can form functional heterotetrameric channels with KCNB1 and KCNB2. Each regulatory subunit has unique regulatory properties that can lead to extensive inhibition, significant changes in kinetics, and/or substantial shifts in the voltage dependencies of the inactivation process. The sequence is that of Delayed-rectifier potassium channel regulatory subunit KCNS2 from Homo sapiens (Human).